The sequence spans 161 residues: Phosphopantetheine adenylyltransferase (161 aa).

Residue S9 coordinates substrate. ATP-binding positions include 9–10 and H17; that span reads SF. 3 residues coordinate substrate: K41, L73, and K87. ATP is bound by residues 88 to 90, E98, and 123 to 129; these read GLR and YSYLSSS.

Belongs to the bacterial CoaD family. Homohexamer. Mg(2+) is required as a cofactor.

The protein localises to the cytoplasm. It catalyses the reaction (R)-4'-phosphopantetheine + ATP + H(+) = 3'-dephospho-CoA + diphosphate. It functions in the pathway cofactor biosynthesis; coenzyme A biosynthesis; CoA from (R)-pantothenate: step 4/5. Its function is as follows. Reversibly transfers an adenylyl group from ATP to 4'-phosphopantetheine, yielding dephospho-CoA (dPCoA) and pyrophosphate. The polypeptide is Phosphopantetheine adenylyltransferase (Clostridium novyi (strain NT)).